A 130-amino-acid polypeptide reads, in one-letter code: Protein ApaG (130 aa).

One can recognise an ApaG domain in the interval 3-127 (KAETRGISVT…FSLDSPHVRR (125 aa)).

In Methylobacterium radiotolerans (strain ATCC 27329 / DSM 1819 / JCM 2831 / NBRC 15690 / NCIMB 10815 / 0-1), this protein is Protein ApaG.